The primary structure comprises 82 residues: Nuclear protein 1 (82 aa).

The interval 1-82 (MATFPPATSA…SERKKRGARR (82 aa)) is disordered. Positions 17–28 (PEDEDSSLDESD) are enriched in acidic residues. The Nuclear localization signal motif lies at 65–82 (KLVTKLQNSERKKRGARR).

This sequence belongs to the NUPR family. In terms of assembly, monomer. Directly interacts with MSL1 and binds MORF4L1, two components of histone acetyltransferase complex; the interaction with MORF4L1 may be mediated by MSL1. Interacts with EP300; this interaction enhances the effect of EP300 on PAX2 transcription factor activity. Interacts with PAXIP1; this interaction prevents PAXIP1 inhibition of PAX2 transcription factor activity. Interacts with COPS5; this interaction allows COPS5-dependent CDKN1B nuclear to cytoplasm translocation. Interacts with RNF2. Interacts with FOXO3; this interaction represses FOXO3 transactivation. Interacts with PTMA; negatively regulates apoptotic process. Interacts with MYOD1, EP300 and DDX5; this interaction coordinates the association of anti-proliferative and pro-myogenic proteins at the myogenin promoter. Interacts with TP53; interaction is stress-dependent. Forms a complex with EP300 and TP53; this complex binds CDKN1A promoter leading to transcriptional induction of CDKN1A. In terms of processing, phosphorylated in vitro by PKA and CK. Phosphorylation promotes DNA-binding activity. Acetylated by EP300 in vitro. In terms of tissue distribution, widely expressed, with high levels in liver, pancreas, prostate, ovary, colon, thyroid, spinal cord, trachea and adrenal gland, moderate levels in heart, placenta, lung, skeletal muscle, kidney, testis, small intestine, stomach and lymph node, and low levels in brain, spleen, thymus and bone marrow. Not detected in peripheral blood leukocytes.

Its subcellular location is the nucleus. It is found in the cytoplasm. The protein resides in the perinuclear region. Functionally, transcription regulator that converts stress signals into a program of gene expression that empowers cells with resistance to the stress induced by a change in their microenvironment. Thereby participates in the regulation of many processes namely cell-cycle, apoptosis, autophagy and DNA repair responses. Controls cell cycle progression and protects cells from genotoxic stress induced by doxorubicin through the complex formation with TP53 and EP300 that binds CDKN1A promoter leading to transcriptional induction of CDKN1A. Protects pancreatic cancer cells from stress-induced cell death by binding the RELB promoter and activating its transcription, leading to IER3 transactivation. Negatively regulates apoptosis through interaction with PTMA. Inhibits autophagy-induced apoptosis in cardiac cells through FOXO3 interaction, inducing cytoplasmic translocation of FOXO3 thereby preventing the FOXO3 association with the pro-autophagic BNIP3 promoter. Inhibits cell growth and facilitates programmed cell death by apoptosis after adriamycin-induced DNA damage through transactivation of TP53. Regulates methamphetamine-induced apoptosis and autophagy through DDIT3-mediated endoplasmic reticulum stress pathway. Participates in DNA repair following gamma-irradiation by facilitating DNA access of the transcription machinery through interaction with MSL1 leading to inhibition of histone H4' Lys-16' acetylation (H4K16ac). Coactivator of PAX2 transcription factor activity, both by recruiting EP300 to increase PAX2 transcription factor activity and by binding PAXIP1 to suppress PAXIP1-induced inhibition on PAX2. Positively regulates cell cycle progression through interaction with COPS5 inducing cytoplasmic translocation of CDKN1B leading to the CDKN1B degradation. Coordinates, through its interaction with EP300, the assiociation of MYOD1, EP300 and DDX5 to the MYOG promoter, leading to inhibition of cell-cycle progression and myogenic differentiation promotion. Negatively regulates beta cell proliferation via inhibition of cell-cycle regulatory genes expression through the suppression of their promoter activities. Also required for LHB expression and ovarian maturation. Exacerbates CNS inflammation and demyelination upon cuprizone treatment. This is Nuclear protein 1 from Homo sapiens (Human).